A 160-amino-acid chain; its full sequence is MKFLVLALCIAAAVAAPLSADEASLVRGSWAQVKHSEVDILYYIFKANPDIMAKFPQFAGKDLETLKGTGQFATHAGRIVGFVSEIVALMGNSANMPAMETLIKDMAANHKARGIPKAQFNEFRASLVSYLQSKVSWNDSLGAAWTQGLDNVFNMMFSYL.

The signal sequence occupies residues 1–15 (MKFLVLALCIAAAVA). The region spanning 17-160 (PLSADEASLV…NVFNMMFSYL (144 aa)) is the Globin domain. Residues His-75 and His-110 each contribute to the heme b site.

The protein belongs to the globin family. Homodimer.

This chain is Globin CTT-II beta, found in Chironomus thummi thummi (Midge).